The sequence spans 426 residues: Endothelin-1 receptor (426 aa).

An N-terminal signal peptide occupies residues 1–20; sequence METFCLKVTFWVALVGYVIG. Residues 21–79 lie on the Extracellular side of the membrane; the sequence is DHPESYSTNLSTPVDFTTFHGTELSFLVTTHRPTNLALPSNGSMHSYCPQQTKITSAFK. Asn29 and Asn61 each carry an N-linked (GlcNAc...) asparagine glycan. A helical transmembrane segment spans residues 80-101; sequence YINTVISCTIFIVGMVGNATLL. Topologically, residues 102 to 111 are cytoplasmic; that stretch reads RIIYQNKCMR. A helical transmembrane segment spans residues 112–131; it reads NGPNALIASLALGDLIYVVI. Over 132–158 the chain is Extracellular; that stretch reads DLPINVFKLLAGRWPFDHNDFGVFLCK. Cys157 and Cys238 are disulfide-bonded. A helical membrane pass occupies residues 159–180; it reads LFPFLQKSSVGITVLNLCALSV. Over 181-204 the chain is Cytoplasmic; the sequence is DRYRAVASWSRVQGIGIPLITAIE. A helical transmembrane segment spans residues 205-228; the sequence is IVSIWILSFILAIPEAIGFVMVPF. At 229–255 the chain is on the extracellular side; the sequence is EYKGEQHKTCMLNATSKFMEFYQDVKD. N-linked (GlcNAc...) asparagine glycosylation is present at Asn241. A helical membrane pass occupies residues 256–277; it reads WWLFGFYFCMPLVCTAIFYTLM. Residues 278 to 305 lie on the Cytoplasmic side of the membrane; that stretch reads TCEMLNRRNGSLRIALSEHLKQRREVAK. Residues 306-327 form a helical membrane-spanning segment; sequence TVFCLVVIFALCWFPLHLSRIL. The Extracellular segment spans residues 328–346; it reads KKTVYDEMDKNRCELLSFL. The chain crosses the membrane as a helical span at residues 347–371; that stretch reads RLMDYIGINLATMNSCINPIALYFV. The Cytoplasmic portion of the chain corresponds to 372–426; it reads SKKFKNCFQSCLCCCCYQSKSLMTSVPMNGTSIQWKNHEQNNHNTERSSHKDSIN. At Ser424 the chain carries Phosphoserine.

This sequence belongs to the G-protein coupled receptor 1 family. Endothelin receptor subfamily. EDNRA sub-subfamily. In terms of assembly, interacts with HDAC7 and KAT5.

It is found in the cell membrane. Its function is as follows. Receptor for endothelin-1. Mediates its action by association with G proteins that activate a phosphatidylinositol-calcium second messenger system. The rank order of binding affinities for ET-A is: ET1 &gt; ET2 &gt;&gt; ET3. This Canis lupus familiaris (Dog) protein is Endothelin-1 receptor.